Here is a 294-residue protein sequence, read N- to C-terminus: Undecaprenyl-diphosphatase (294 aa).

The next 9 membrane-spanning stretches (helical) occupy residues 2-22, 27-47, 65-85, 110-130, 135-155, 172-192, 215-235, 239-259, and 272-292; these read SMIY…SLIL, LVFS…PISS, VIAF…KIFW, LCIR…MIFY, LIFE…FLLV, ITYL…WPGF, FSFF…LYHY, IGLM…FIAL, and VSLI…YWGL.

It belongs to the UppP family.

It localises to the cell inner membrane. It carries out the reaction di-trans,octa-cis-undecaprenyl diphosphate + H2O = di-trans,octa-cis-undecaprenyl phosphate + phosphate + H(+). Functionally, catalyzes the dephosphorylation of undecaprenyl diphosphate (UPP). Confers resistance to bacitracin. In Blochmanniella pennsylvanica (strain BPEN), this protein is Undecaprenyl-diphosphatase.